A 425-amino-acid polypeptide reads, in one-letter code: uncharacterized protein (425 aa).

An F-box domain is found at 2–53; it reads SFNLLDLPIVPRQKALKYLEPIDLFELSLCSKRMAQSVRDLKIEASAHFITL.

This is an uncharacterized protein from Caenorhabditis elegans.